A 182-amino-acid polypeptide reads, in one-letter code: ATP-dependent protease subunit HslV (182 aa).

T10 is an active-site residue. Na(+) is bound by residues A166, C169, and S172.

Belongs to the peptidase T1B family. HslV subfamily. In terms of assembly, a double ring-shaped homohexamer of HslV is capped on each side by a ring-shaped HslU homohexamer. The assembly of the HslU/HslV complex is dependent on binding of ATP.

The protein resides in the cytoplasm. The catalysed reaction is ATP-dependent cleavage of peptide bonds with broad specificity.. With respect to regulation, allosterically activated by HslU binding. In terms of biological role, protease subunit of a proteasome-like degradation complex believed to be a general protein degrading machinery. This chain is ATP-dependent protease subunit HslV, found in Rickettsia prowazekii (strain Madrid E).